A 56-amino-acid polypeptide reads, in one-letter code: Ribosome modulation factor (56 aa).

This sequence belongs to the ribosome modulation factor family.

Its subcellular location is the cytoplasm. During stationary phase, converts 70S ribosomes to an inactive dimeric form (100S ribosomes). The protein is Ribosome modulation factor of Proteus mirabilis (strain HI4320).